The following is a 351-amino-acid chain: Putative [LysW]-L-2-aminoadipate/[LysW]-L-glutamate phosphate reductase (351 aa).

NADP(+) is bound by residues S10–T13 and S34–K36. C151 is an active-site residue. N318 serves as a coordination point for NADP(+).

It belongs to the NAGSA dehydrogenase family. Type 1 subfamily. LysY sub-subfamily.

It localises to the cytoplasm. It carries out the reaction [amino-group carrier protein]-C-terminal-N-(1-carboxy-5-oxopentan-1-yl)-L-glutamine + phosphate + NADP(+) = [amino-group carrier protein]-C-terminal-N-(1-carboxy-5-phosphooxy-5-oxopentan-1-yl)-L-glutamine + NADPH + H(+). The enzyme catalyses [amino-group carrier protein]-C-terminal-gamma-(L-glutamyl-5-semialdehyde)-L-glutamate + phosphate + NADP(+) = [amino-group carrier protein]-C-terminal-gamma-(5-phospho-L-glutamyl)-L-glutamate + NADPH + H(+). It functions in the pathway amino-acid biosynthesis; L-lysine biosynthesis via AAA pathway; L-lysine from L-alpha-aminoadipate (Thermus route): step 3/5. The protein operates within amino-acid biosynthesis; L-arginine biosynthesis. Its function is as follows. Involved in both the arginine and lysine biosynthetic pathways. The polypeptide is Putative [LysW]-L-2-aminoadipate/[LysW]-L-glutamate phosphate reductase (Pyrobaculum calidifontis (strain DSM 21063 / JCM 11548 / VA1)).